Reading from the N-terminus, the 337-residue chain is Ketol-acid reductoisomerase (NADP(+)) (337 aa).

Positions 3–183 constitute a KARI N-terminal Rossmann domain; it reads VEMFYDDDAD…GGARAGVIKT (181 aa). NADP(+) is bound by residues 26–29, lysine 49, serine 52, serine 54, and 84–87; these read YGSQ and DTAQ. The active site involves histidine 109. An NADP(+)-binding site is contributed by glycine 135. A KARI C-terminal knotted domain is found at 184 to 329; it reads TFKEETETDL…KKLRDLMSWV (146 aa). Aspartate 192, glutamate 196, glutamate 228, and glutamate 232 together coordinate Mg(2+). Serine 253 provides a ligand contact to substrate.

This sequence belongs to the ketol-acid reductoisomerase family. Mg(2+) serves as cofactor.

It carries out the reaction (2R)-2,3-dihydroxy-3-methylbutanoate + NADP(+) = (2S)-2-acetolactate + NADPH + H(+). The catalysed reaction is (2R,3R)-2,3-dihydroxy-3-methylpentanoate + NADP(+) = (S)-2-ethyl-2-hydroxy-3-oxobutanoate + NADPH + H(+). It participates in amino-acid biosynthesis; L-isoleucine biosynthesis; L-isoleucine from 2-oxobutanoate: step 2/4. The protein operates within amino-acid biosynthesis; L-valine biosynthesis; L-valine from pyruvate: step 2/4. Its function is as follows. Involved in the biosynthesis of branched-chain amino acids (BCAA). Catalyzes an alkyl-migration followed by a ketol-acid reduction of (S)-2-acetolactate (S2AL) to yield (R)-2,3-dihydroxy-isovalerate. In the isomerase reaction, S2AL is rearranged via a Mg-dependent methyl migration to produce 3-hydroxy-3-methyl-2-ketobutyrate (HMKB). In the reductase reaction, this 2-ketoacid undergoes a metal-dependent reduction by NADPH to yield (R)-2,3-dihydroxy-isovalerate. In Mycobacterium sp. (strain JLS), this protein is Ketol-acid reductoisomerase (NADP(+)).